A 246-amino-acid polypeptide reads, in one-letter code: NAD-dependent protein deacylase (246 aa).

The 237-residue stretch at 1-237 folds into the Deacetylase sirtuin-type domain; the sequence is MSLPYRHVVI…PRLVEEILAA (237 aa). 13–32 is a binding site for NAD(+); that stretch reads GAGISAESGIQTFRAQDGLW. Residues Tyr57 and Arg60 each contribute to the substrate site. 94–97 serves as a coordination point for NAD(+); that stretch reads QNID. His112 acts as the Proton acceptor in catalysis. Zn(2+) is bound by residues Cys120 and Cys139. NAD(+) contacts are provided by residues 179–181, 205–207, and Ala223; these read GTS and NLE.

Belongs to the sirtuin family. Class III subfamily. The cofactor is Zn(2+).

The protein resides in the cytoplasm. It carries out the reaction N(6)-acetyl-L-lysyl-[protein] + NAD(+) + H2O = 2''-O-acetyl-ADP-D-ribose + nicotinamide + L-lysyl-[protein]. The enzyme catalyses N(6)-succinyl-L-lysyl-[protein] + NAD(+) + H2O = 2''-O-succinyl-ADP-D-ribose + nicotinamide + L-lysyl-[protein]. Functionally, NAD-dependent lysine deacetylase and desuccinylase that specifically removes acetyl and succinyl groups on target proteins. Modulates the activities of several proteins which are inactive in their acylated form. The protein is NAD-dependent protein deacylase of Vibrio cholerae serotype O1 (strain ATCC 39315 / El Tor Inaba N16961).